Here is a 390-residue protein sequence, read N- to C-terminus: 23S rRNA (uracil(747)-C(5))-methyltransferase RlmC (390 aa).

The [4Fe-4S] cluster site is built by cysteine 12, cysteine 20, cysteine 23, and cysteine 100. S-adenosyl-L-methionine-binding residues include glutamine 225, phenylalanine 254, glutamate 275, and asparagine 322. Cysteine 349 functions as the Nucleophile in the catalytic mechanism.

The protein belongs to the class I-like SAM-binding methyltransferase superfamily. RNA M5U methyltransferase family. RlmC subfamily.

It carries out the reaction uridine(747) in 23S rRNA + S-adenosyl-L-methionine = 5-methyluridine(747) in 23S rRNA + S-adenosyl-L-homocysteine + H(+). Catalyzes the formation of 5-methyl-uridine at position 747 (m5U747) in 23S rRNA. This chain is 23S rRNA (uracil(747)-C(5))-methyltransferase RlmC, found in Shewanella baltica (strain OS155 / ATCC BAA-1091).